An 88-amino-acid chain; its full sequence is U-scoloptoxin(12)-Sa1a (88 aa).

Residues 1 to 20 (MKYMIITVVILFTCALKMFC) form the signal peptide.

It belongs to the scoloptoxin-12 family. Post-translationally, contains 3 disulfide bonds. Expressed by the venom gland.

It is found in the secreted. This is U-scoloptoxin(12)-Sa1a from Scolopendra alternans (Florida Keys giant centipede).